The primary structure comprises 692 residues: Elongation factor G (692 aa).

In terms of domain architecture, tr-type G spans 8 to 283; the sequence is DRYRNIGIMA…AVVDFLPSPL (276 aa). GTP-binding positions include 17 to 24, 81 to 85, and 135 to 138; these read AHIDAGKT, DTPGH, and NKMD.

The protein belongs to the TRAFAC class translation factor GTPase superfamily. Classic translation factor GTPase family. EF-G/EF-2 subfamily.

The protein resides in the cytoplasm. Functionally, catalyzes the GTP-dependent ribosomal translocation step during translation elongation. During this step, the ribosome changes from the pre-translocational (PRE) to the post-translocational (POST) state as the newly formed A-site-bound peptidyl-tRNA and P-site-bound deacylated tRNA move to the P and E sites, respectively. Catalyzes the coordinated movement of the two tRNA molecules, the mRNA and conformational changes in the ribosome. The polypeptide is Elongation factor G (Rhodospirillum rubrum (strain ATCC 11170 / ATH 1.1.1 / DSM 467 / LMG 4362 / NCIMB 8255 / S1)).